The following is a 590-amino-acid chain: Potassium-transporting ATPase potassium-binding subunit (590 aa).

The next 4 helical transmembrane spans lie at 3–23 (AFLL…RPLG), 63–83 (HYAL…YALQ), 134–154 (GLAV…IALI), and 177–197 (LYVL…QGAI). The disordered stretch occupies residues 217-244 (PKTDAQGNPIKDAQGNPVTEKATTQKQT). 8 helical membrane passes run 284–304 (FVQM…FGAM), 312–332 (WAVL…EMWA), 359–379 (FGVV…CGAV), 388–408 (ALGG…FGGV), 411–431 (GLYG…LMIG), 450–470 (SIAI…AVLA), 515–535 (VALG…VLAM), and 558–578 (LFVV…YIPA).

Belongs to the KdpA family. In terms of assembly, the system is composed of three essential subunits: KdpA, KdpB and KdpC.

The protein resides in the cell inner membrane. Part of the high-affinity ATP-driven potassium transport (or Kdp) system, which catalyzes the hydrolysis of ATP coupled with the electrogenic transport of potassium into the cytoplasm. This subunit binds the periplasmic potassium ions and delivers the ions to the membrane domain of KdpB through an intramembrane tunnel. The protein is Potassium-transporting ATPase potassium-binding subunit of Ralstonia nicotianae (strain ATCC BAA-1114 / GMI1000) (Ralstonia solanacearum).